The primary structure comprises 427 residues: Enolase (427 aa).

Residue glutamine 163 participates in (2R)-2-phosphoglycerate binding. Catalysis depends on glutamate 205, which acts as the Proton donor. Mg(2+) is bound by residues aspartate 242, glutamate 283, and aspartate 310. Residues lysine 335, arginine 364, serine 365, and lysine 386 each contribute to the (2R)-2-phosphoglycerate site. The active-site Proton acceptor is lysine 335.

The protein belongs to the enolase family. The cofactor is Mg(2+).

The protein resides in the cytoplasm. Its subcellular location is the secreted. It is found in the cell surface. The enzyme catalyses (2R)-2-phosphoglycerate = phosphoenolpyruvate + H2O. Its pathway is carbohydrate degradation; glycolysis; pyruvate from D-glyceraldehyde 3-phosphate: step 4/5. Functionally, catalyzes the reversible conversion of 2-phosphoglycerate (2-PG) into phosphoenolpyruvate (PEP). It is essential for the degradation of carbohydrates via glycolysis. In Salinispora arenicola (strain CNS-205), this protein is Enolase.